Reading from the N-terminus, the 228-residue chain is Phosphoglycolate phosphatase (228 aa).

The active-site Nucleophile is Asp12. 3 residues coordinate Mg(2+): Asp12, Asp14, and Asp177.

It belongs to the HAD-like hydrolase superfamily. CbbY/CbbZ/Gph/YieH family. Requires Mg(2+) as cofactor.

It catalyses the reaction 2-phosphoglycolate + H2O = glycolate + phosphate. The protein operates within organic acid metabolism; glycolate biosynthesis; glycolate from 2-phosphoglycolate: step 1/1. Its function is as follows. Specifically catalyzes the dephosphorylation of 2-phosphoglycolate. Is involved in the dissimilation of the intracellular 2-phosphoglycolate formed during the DNA repair of 3'-phosphoglycolate ends, a major class of DNA lesions induced by oxidative stress. In Vibrio parahaemolyticus serotype O3:K6 (strain RIMD 2210633), this protein is Phosphoglycolate phosphatase.